The following is a 592-amino-acid chain: Transmembrane 9 superfamily member 2 (592 aa).

Positions 1-24 (MRTPTTILLLVGAILFSGAGYVRS) are cleaved as a signal peptide. Topologically, residues 25-229 (DASDHRYKEG…SLPHHLEIHW (205 aa)) are lumenal. Residues 230–250 (FSIINSCVTVLLLTGFLATIL) form a helical membrane-spanning segment. The Cytoplasmic portion of the chain corresponds to 251–302 (MRVLKNDFMKYAQDEEAADDQEETGWKYIHGDVFRFPTHNSLFAASLGSGTQ). Residues 303 to 323 (LFTLTIFIFMLALVGVFYPYN) form a helical membrane-spanning segment. Arg324 is a topological domain (lumenal). Residues 325–345 (GALFTALVVIYALTSGIAGYT) form a helical membrane-spanning segment. At 346–362 (SASFYCQLEGKSWVRNL) the chain is on the cytoplasmic side. A helical transmembrane segment spans residues 363-383 (LLTGCLFCGPLFLTFCFLNTV). Topologically, residues 384–397 (AITYTATAALPFGT) are lumenal. The chain crosses the membrane as a helical span at residues 398 to 418 (IVVIVLIWTLVTSPLLVLGGI). Over 419–452 (AGKNSKAEFQAPCRTTKYPREIPPLPWYRSAIPQ) the chain is Cytoplasmic. The chain crosses the membrane as a helical span at residues 453–473 (MAMAGFLPFSAIYIELYYIFA). Residues 474-485 (SVWGHRIYTIYS) are Lumenal-facing. A helical transmembrane segment spans residues 486–506 (ILFIVFIILIIVTAFITVALT). Over 507–521 (YFQLAAEDHQWWWRS) the chain is Cytoplasmic. A helical membrane pass occupies residues 522–542 (FLCGGSTGLFIYAYCLYYYYA). Topologically, residues 543-553 (RSDMSGFMQTS) are lumenal. A helical membrane pass occupies residues 554 to 574 (FFFGYMACICYGFFLMLGTVG). The Cytoplasmic segment spans residues 575–592 (FRAALLFVRHIYRSIKCE). An Endoplasmic reticulum export signal motif is present at residues 581 to 586 (FVRHIY). A Golgi retention signal motif is present at residues 590-592 (KCE).

The protein belongs to the nonaspanin (TM9SF) (TC 9.A.2) family.

Its subcellular location is the endosome membrane. It localises to the golgi apparatus membrane. This Arabidopsis thaliana (Mouse-ear cress) protein is Transmembrane 9 superfamily member 2.